The primary structure comprises 295 residues: Cytidine deaminase (295 aa).

2 consecutive CMP/dCMP-type deaminase domains span residues 48-168 and 187-295; these read ADDE…FGPA and EETT…YLAI. A substrate-binding site is contributed by 89 to 91; the sequence is NLE. H102 is a Zn(2+) binding site. E104 functions as the Proton donor in the catalytic mechanism. 2 residues coordinate Zn(2+): C129 and C132.

Belongs to the cytidine and deoxycytidylate deaminase family. As to quaternary structure, homodimer. It depends on Zn(2+) as a cofactor.

It carries out the reaction cytidine + H2O + H(+) = uridine + NH4(+). It catalyses the reaction 2'-deoxycytidine + H2O + H(+) = 2'-deoxyuridine + NH4(+). In terms of biological role, this enzyme scavenges exogenous and endogenous cytidine and 2'-deoxycytidine for UMP synthesis. The chain is Cytidine deaminase from Vibrio atlanticus (strain LGP32) (Vibrio splendidus (strain Mel32)).